The following is an 800-amino-acid chain: MLISNEWLKDYVDAGVKVEDLAERITRTGIEVDDMIDYSKDIKNLVVGYIQSKEKHPDADKLNICQVDIGEEEPVQIVCGAPNVDAGQHVIVAKVGGRLPGGIKIKRAKLRGERSEGMICSLQEIGISSNVVPKAYENGIFVFQTEVEPGTDALTALYLNDQVMEFDLTPNRADALSMVGTAYEVAALYQTEMTKPETQSNETSESATNELSVTIDNPEKVPYYSARVVKNVSIEPSPIWVQARLIKAGIRPINNVVDISNYVLLEYGQPLHMFDQDHIGSKEIVVRQAKDEETMTTLDNNERKLVDTDIVISNGQEPIALAGVMGGDFSEVTEQTTNVVIEGAIFDPVSIRHTSRRLNLRSEASSRFEKGIATEFVDEAVDRACYLLQELASGEVLQDRVSSGDLGSFVTPIDITAEKVNKTIGFNLSNDEIQSIFRQLGFETTLKGETLTVNVPSRRKDITIKEDLIEEVARIYGYDEIPSSLPVFGEVTSGELTDRQHKTRTLKETLEGAGLNQAITYSLVSKDHAKDFALQERPTISLLMPMSEAHATLRQSLLPHLIEATAYNVARKNKDVRLYEIGRVFFGNGEGELPDEVEYLSGILTGEYVVNAWQGKKEEIDFFIAKGVVDRVAEKLNLEFSYKAGKIEGLHPGRTAIVSLEGQDIGFIGELHPQVAADNDLKRTYVFELNYDAMMQVAVGYINYEQIPKFPGVTRDIALEVNHDVPSSELKQIIHNNGEDILQSTLVFDVYEGEHLEKGKKSVAIRLNYLDTEDTLTDERVSKIHDKILEALQAQGATIR.

In terms of domain architecture, tRNA-binding spans 39–154 (SKDIKNLVVG…TEVEPGTDAL (116 aa)). Residues 408–483 (SFVTPIDITA…RIYGYDEIPS (76 aa)) form the B5 domain. Mg(2+) is bound by residues D461, D467, E470, and E471. In terms of domain architecture, FDX-ACB spans 708 to 800 (PKFPGVTRDI…ALQAQGATIR (93 aa)).

It belongs to the phenylalanyl-tRNA synthetase beta subunit family. Type 1 subfamily. In terms of assembly, tetramer of two alpha and two beta subunits. Mg(2+) serves as cofactor.

The protein localises to the cytoplasm. It carries out the reaction tRNA(Phe) + L-phenylalanine + ATP = L-phenylalanyl-tRNA(Phe) + AMP + diphosphate + H(+). The sequence is that of Phenylalanine--tRNA ligase beta subunit from Staphylococcus haemolyticus (strain JCSC1435).